Reading from the N-terminus, the 170-residue chain is Calcineurin subunit B type 2 (170 aa).

EF-hand domains lie at 18–46 (DEIR…FMSL), 50–85 (QQNP…FSVK), 87–122 (DKLS…MVGN), and 128–163 (QLQQ…TDIH). The Ca(2+) site is built by aspartate 31, aspartate 33, serine 35, glutamate 42, aspartate 63, aspartate 65, asparagine 67, glutamate 69, glutamate 74, aspartate 100, aspartate 102, aspartate 104, tyrosine 106, glutamate 111, aspartate 141, aspartate 143, aspartate 145, lysine 147, and glutamate 152. Serine 35 carries the phosphoserine modification.

Belongs to the calcineurin regulatory subunit family. Composed of a catalytic subunit (A) and a regulatory subunit (B). Interacts with sra.

Functionally, calcineurin is a calcium-binding and calmodulin-binding protein found in all cells from yeast to mammals, and a calcium-dependent, calmodulin-stimulated protein phosphatase. The chain is Calcineurin subunit B type 2 (CanB2) from Drosophila melanogaster (Fruit fly).